The sequence spans 463 residues: Sialic acid-binding Ig-like lectin 9 (463 aa).

A signal peptide spans 1–17 (MLLLLLPLLWGRERAEG). The Extracellular portion of the chain corresponds to 18–348 (QTSKLLTMQS…SKATSGVTQG (331 aa)). Residues 20-140 (SKLLTMQSSV…KHHRLSVNVT (121 aa)) enclose the Ig-like V-type domain. Intrachain disulfides connect C36-C170, C41-C102, and C164-C213. N-linked (GlcNAc...) asparagine glycosylation occurs at N101. R120 contacts N-acetylneuraminate. N138 and N161 each carry an N-linked (GlcNAc...) asparagine glycan. Residues 146-229 (PNILIPGTLE…ASVTTNKTVH (84 aa)) enclose the Ig-like C2-type 1 domain. N-linked (GlcNAc...) asparagine glycans are attached at residues N225, N231, N238, and N256. In terms of domain architecture, Ig-like C2-type 2 spans 236-336 (PQNLTMTVFQ…GSQQVYLNVS (101 aa)). Cysteines 272 and 320 form a disulfide. N334 carries an N-linked (GlcNAc...) asparagine glycan. The helical transmembrane segment at 349–369 (VVGGAGATALVFLSFCVIFVV) threads the bilayer. The Cytoplasmic portion of the chain corresponds to 370 to 463 (VRSCRKKSAR…TEYSEIKIHR (94 aa)). The disordered stretch occupies residues 380 to 428 (PAAGVGDTGIEDANAVRGSASQGPLTEPWAEDSPPDQPPPASARSSVGE). Positions 431 to 436 (LQYASL) match the ITIM motif motif. The tract at residues 444 to 463 (WDSRGQEATDTEYSEIKIHR) is disordered. Residues 454-459 (TEYSEI) carry the SLAM-like motif motif.

Belongs to the immunoglobulin superfamily. SIGLEC (sialic acid binding Ig-like lectin) family. Expressed by peripheral blood leukocytes (neutrophils and monocytes but not eosinophils). Found in liver, fetal liver, bone marrow, placenta, spleen and in lower levels in skeletal muscle, fetal brain, stomach, lung, thymus, prostate, brain, mammary, adrenal gland, colon, trachea, cerebellum, testis, small intestine and spinal cordon.

It localises to the membrane. Putative adhesion molecule that mediates sialic-acid dependent binding to cells. Preferentially binds to alpha-2,3- or alpha-2,6-linked sialic acid. The sialic acid recognition site may be masked by cis interactions with sialic acids on the same cell surface. This is Sialic acid-binding Ig-like lectin 9 (SIGLEC9) from Homo sapiens (Human).